Reading from the N-terminus, the 152-residue chain is D-aminoacyl-tRNA deacylase (152 aa).

Residues 142–143 (GP) carry the Gly-cisPro motif, important for rejection of L-amino acids motif.

It belongs to the DTD family. As to quaternary structure, homodimer.

It is found in the cytoplasm. The enzyme catalyses glycyl-tRNA(Ala) + H2O = tRNA(Ala) + glycine + H(+). It carries out the reaction a D-aminoacyl-tRNA + H2O = a tRNA + a D-alpha-amino acid + H(+). In terms of biological role, an aminoacyl-tRNA editing enzyme that deacylates mischarged D-aminoacyl-tRNAs. Also deacylates mischarged glycyl-tRNA(Ala), protecting cells against glycine mischarging by AlaRS. Acts via tRNA-based rather than protein-based catalysis; rejects L-amino acids rather than detecting D-amino acids in the active site. By recycling D-aminoacyl-tRNA to D-amino acids and free tRNA molecules, this enzyme counteracts the toxicity associated with the formation of D-aminoacyl-tRNA entities in vivo and helps enforce protein L-homochirality. The sequence is that of D-aminoacyl-tRNA deacylase from Paraburkholderia phytofirmans (strain DSM 17436 / LMG 22146 / PsJN) (Burkholderia phytofirmans).